The following is a 386-amino-acid chain: Methylthioribose-1-phosphate isomerase (386 aa).

The Proton donor role is filled by Asp258.

The protein belongs to the eIF-2B alpha/beta/delta subunits family. MtnA subfamily.

It is found in the cytoplasm. The protein localises to the nucleus. It carries out the reaction 5-(methylsulfanyl)-alpha-D-ribose 1-phosphate = 5-(methylsulfanyl)-D-ribulose 1-phosphate. The protein operates within amino-acid biosynthesis; L-methionine biosynthesis via salvage pathway; L-methionine from S-methyl-5-thio-alpha-D-ribose 1-phosphate: step 1/6. Its function is as follows. Catalyzes the interconversion of methylthioribose-1-phosphate (MTR-1-P) into methylthioribulose-1-phosphate (MTRu-1-P). The chain is Methylthioribose-1-phosphate isomerase from Postia placenta (strain ATCC 44394 / Madison 698-R) (Brown rot fungus).